The primary structure comprises 59 residues: Aedesin (59 aa).

A signal peptide spans 1–23 (MNFTKLFAIVLLAALVLLGQTEA).

The protein belongs to the cecropin family. In terms of tissue distribution, salivary gland (at protein level).

Its subcellular location is the secreted. Its function is as follows. Antimicrobial peptide. Exhibits antibacterial activity against Gram-negative bacteria, such as Escherichia coli, Pseudomonas aeruginosa, Acinetobacter baumannii and Klebsiella pneumoniae. Shows no antibacterial effects against Gram-positive bacteria, such as Staphylococcus aureus, Enterococcus faecalis and Enterococcus faecium. Exhibits antiviral activity against all four dengue virus serotypes and chikungunya virus. Exhibits leishmanicidal activity. Partially neutralizes lipopolysaccharides (LPS). Exhibits anti-inflammatory properties: inhibits LPS-induced iNOS/NOS2 transcription, nitric oxide (NO) and pro-inflammatory cytokine production in mouse macrophages and human peripheral blood mononuclear cells (PBMCs); inhibits LPS-induced activation of MAPK and NF-kappa-B signaling pathways in mouse macrophages. The chain is Aedesin from Aedes aegypti (Yellowfever mosquito).